The primary structure comprises 323 residues: Probable cell division protein WhiA (323 aa).

A DNA-binding region (H-T-H motif) is located at residues 275-309; that stretch reads TLKELGEMLTTGQVSKSGINHRLRKLDQIAERLRS.

The protein belongs to the WhiA family.

Its function is as follows. Involved in cell division and chromosome segregation. In Listeria monocytogenes serotype 4b (strain CLIP80459), this protein is Probable cell division protein WhiA.